The primary structure comprises 686 residues: WD repeat-containing protein 93 (686 aa).

Over residues M1–Q10 the composition is skewed to polar residues. A disordered region spans residues M1–D40. Over residues T29–D40 the composition is skewed to basic and acidic residues. The WD repeat unit spans residues P410–V449.

The polypeptide is WD repeat-containing protein 93 (WDR93) (Homo sapiens (Human)).